The chain runs to 211 residues: MRNIQIALTKGRLEKHVIPLFEQIGIDCSELKNKGRKLVFQSKNTDISFILVKAVDVATYVEHGVADIGVVGKDILMENEKDIYEMLDLGVGVCKFCVASIPTYNPKSYRKKCIATKYPHITSNYFHDKGEDVEIIKIEGSVEIAPILGLADAIVDIVETGKTLQENGLIVFEEMYSISARMIVNKAALKTKKDEIFSIINMMEQEILSGK.

It belongs to the ATP phosphoribosyltransferase family. Short subfamily. In terms of assembly, heteromultimer composed of HisG and HisZ subunits.

The protein localises to the cytoplasm. It carries out the reaction 1-(5-phospho-beta-D-ribosyl)-ATP + diphosphate = 5-phospho-alpha-D-ribose 1-diphosphate + ATP. Its pathway is amino-acid biosynthesis; L-histidine biosynthesis; L-histidine from 5-phospho-alpha-D-ribose 1-diphosphate: step 1/9. Catalyzes the condensation of ATP and 5-phosphoribose 1-diphosphate to form N'-(5'-phosphoribosyl)-ATP (PR-ATP). Has a crucial role in the pathway because the rate of histidine biosynthesis seems to be controlled primarily by regulation of HisG enzymatic activity. The chain is ATP phosphoribosyltransferase from Bacillus cereus (strain AH187).